The primary structure comprises 465 residues: Respiratory transcription factor ZNF1 (465 aa).

The segment at residues 8 to 34 (CDCCCIRRVKCDRKKPCKCCLQHNLQC) is a DNA-binding region (zn(2)-C6 fungal-type).

This sequence belongs to the MAL13 family.

It localises to the nucleus. Transcription factor that regulates respiratory growth and plays a critical role in stress adaptation during non-fermentative growth. Binds to promoters of genes involved in non-fermentative metabolism, including processes such as gluconeogenesis (PCK1, FBP1 and MDH2), glyoxylate shunt (MLS1 and ICL1) and the tricarboxylic acid cycle (ACO1). Plays a role in maintaining mitochondrial morphology and function. Also plays a role in tolerance to pH and osmotic stress, especially during the oxidative metabolism. This is Respiratory transcription factor ZNF1 from Saccharomyces cerevisiae (strain ATCC 204508 / S288c) (Baker's yeast).